A 132-amino-acid chain; its full sequence is ATP synthase epsilon chain (132 aa).

Belongs to the ATPase epsilon chain family. F-type ATPases have 2 components, CF(1) - the catalytic core - and CF(0) - the membrane proton channel. CF(1) has five subunits: alpha(3), beta(3), gamma(1), delta(1), epsilon(1). CF(0) has three main subunits: a, b and c.

The protein localises to the cell inner membrane. Its function is as follows. Produces ATP from ADP in the presence of a proton gradient across the membrane. The sequence is that of ATP synthase epsilon chain from Anaeromyxobacter sp. (strain Fw109-5).